The following is a 659-amino-acid chain: Zinc finger protein 304 (659 aa).

The 75-residue stretch at 14-88 folds into the KRAB domain; sequence VTFEDVFVYF…TAESGLFQKA (75 aa). 16 consecutive C2H2-type zinc fingers follow at residues 89–111, 115–139, 251–273, 279–301, 307–329, 335–357, 363–385, 391–413, 419–441, 447–469, 475–497, 503–525, 531–553, 559–581, 587–609, and 615–637; these read HPCEMCDPLLKDILHLAEHQGSH, KLCTRGLCRRRFSFSANFYQHQKQH, FRCLPCGNVFKEKSALINHRKIH, HVCKECGKAFIHLHHLKMHQKFH, YTCSECGKAFSRKDTLVQHQRVH, YDCSECGKAYSRSSHLVQHQRIH, YKCNKCGKAFSRKDTLVQHQRFH, YECSECGKFFSQSSHLIEHWRIH, YECIECGKFFSHNSSLIKHRRVH, YVCSKCGKAFGCKDTLVQHQIIH, YECSECGKAFSRKDTLVQHQKIH, YECGECGKFFSHSSNLIVHQRIH, YECNECGKCFSHNSSLILHQRVH, YVCSECGKAYISSSHLVQHKKVH, YECSECGKFFSRNSGLILHQRVH, and YVCSECGKAYSRSSHLVRHQKAH.

This sequence belongs to the krueppel C2H2-type zinc-finger protein family. In terms of assembly, probably part of a corepressor complex containing ZNF304, TRIM28, SETDB1 and DNMT1; leading to promoter hypermethylation and transcriptional silencing. Probably associates with Polycomb group (PcG) complexes; leading to trimethylation of 'Lys-27' of histone H3 (H3K27me3). Interacts with USP28. Deubiquitinated by USP28; the deubiquitination leads to the stabilization of ZNF304 from proteolytic degradation. As to expression, expressed in undifferentiated embryonic stem cells (ESCs). Expressed strongly in colorectal cancers cells (CRCs). Expressed strongly in ovarian carcinoma (OC) tumor cell lines compared to non-transformed ovarian epithelial cells (at protein level). Expressed in lymphoid tissues, thyroid, adrenal gland, prostate, pancreas and skeletal muscles.

Its subcellular location is the nucleus. Acts as a transcriptional regulator and plays a role in gene silencing. Probably forms a corepressor complex required for activated KRAS-mediated promoter hypermethylation and transcriptional silencing of several tumor suppressor genes (TSGs) or other tumor-related genes in colorectal cancer (CRC) cells. Also required to maintain a transcriptionally repressive state of genes in undifferentiated embryonic stem cells (ESCs) by inducing trimethylation of 'Lys-27' of histone H3 (H3K27me3) in a Polycomb group (PcG) complexes-dependent manner. Associates at promoter regions of TSGs and mediates the recruitment of the corepressor complex containing the scaffolding protein TRIM28, methyltransferase DNMT1 and histone methyltransferase SETDB1 and/or the PcG complexes at those sites. Transcription factor involved in the metastatic cascade process by inducing cell migration and proliferation and gain resistance to anoikis of ovarian carcinoma (OC) cells via integrin-mediated signaling pathways. Associates with the ITGB1 promoter and positively regulates beta-1 integrin transcription expression. Promotes angiogenesis. Promotes tumor growth. This is Zinc finger protein 304 from Homo sapiens (Human).